The primary structure comprises 312 residues: Putative endo-1,4-beta-xylanase (312 aa).

The GH10 domain occupies methionine 1–alanine 301. Glutamate 104 functions as the Proton donor in the catalytic mechanism. Catalysis depends on glutamate 216, which acts as the Nucleophile.

Belongs to the glycosyl hydrolase 10 (cellulase F) family.

It carries out the reaction Endohydrolysis of (1-&gt;4)-beta-D-xylosidic linkages in xylans.. The protein operates within glycan degradation; xylan degradation. In terms of biological role, could be a xylanase. The chain is Putative endo-1,4-beta-xylanase from Caldicellulosiruptor saccharolyticus (Caldocellum saccharolyticum).